Consider the following 146-residue polypeptide: Mitochondrial DnaJ homolog 2 (146 aa).

The J domain maps to 85–146 (EALLILDISA…LERSVLLRKR (62 aa)).

As to quaternary structure, interacts with PAM16/TIM16 and is recruited by the PAM complex.

The protein resides in the mitochondrion inner membrane. Its function is as follows. Plays a role in mitochondrial biogenesis and protein folding. Participates in the translocation of transit peptide-containing proteins from the inner membrane into the mitochondrial matrix in an ATP-dependent manner, probably by stimulating activity of mtHSP70 (SSC1). The chain is Mitochondrial DnaJ homolog 2 (MDJ2) from Saccharomyces cerevisiae (strain ATCC 204508 / S288c) (Baker's yeast).